The following is a 529-amino-acid chain: Cytochrome P450 monooxygenase 45 (529 aa).

A helical transmembrane segment spans residues 24–44; that stretch reads VLTICILALLTFVLREIVLYF. Residues asparagine 185 and asparagine 322 are each glycosylated (N-linked (GlcNAc...) asparagine). Cysteine 454 is a heme binding site.

The protein belongs to the cytochrome P450 family. The cofactor is heme.

It is found in the membrane. Its pathway is secondary metabolite biosynthesis. In terms of biological role, cytochrome P450 monooxygenase that is able to use trans-stilbene as a substrate for oxidation. In Postia placenta (strain ATCC 44394 / Madison 698-R) (Brown rot fungus), this protein is Cytochrome P450 monooxygenase 45.